The chain runs to 523 residues: Ribonuclease Y (523 aa).

The helical transmembrane segment at 28-48 threads the bilayer; sequence TYYIVATIIIAVIAVYVDYYI. A KH domain is found at 227–312; sequence TVYVVNLPND…EMVEKAKKEV (86 aa). Residues 353-446 form the HD domain; that stretch reads VLKHSIEVSY…VQAADAISAA (94 aa).

Belongs to the RNase Y family.

The protein localises to the cell membrane. Functionally, endoribonuclease that initiates mRNA decay. The sequence is that of Ribonuclease Y from Clostridium tetani (strain Massachusetts / E88).